The following is a 490-amino-acid chain: GTPase Der (490 aa).

The EngA-type G 1 domain maps to 1-165 (MRIAILGRPN…RIRQVAEIPL (165 aa)). GTP-binding positions include 7-14 (GRPNVGKS), 54-58 (DTGGV), and 117-120 (NKAD). The interval 165-184 (LPSAEEQENTQEEEFSSKES) is disordered. Residues 169-178 (EEQENTQEEE) show a composition bias toward acidic residues. One can recognise an EngA-type G 2 domain in the interval 227–400 (LKVALIGHPN…AVDDVYTIAT (174 aa)). GTP-binding positions include 233–240 (GHPNVGKS), 280–284 (DTAGL), and 345–348 (NKWD). A KH-like domain is found at 401-485 (TKLSTSLVNK…PFDLEYKAKP (85 aa)).

This sequence belongs to the TRAFAC class TrmE-Era-EngA-EngB-Septin-like GTPase superfamily. EngA (Der) GTPase family. Associates with the 50S ribosomal subunit.

GTPase that plays an essential role in the late steps of ribosome biogenesis. The chain is GTPase Der from Chlamydia muridarum (strain MoPn / Nigg).